Reading from the N-terminus, the 200-residue chain is Protein GrpE (200 aa).

Basic and acidic residues predominate over residues 1 to 10 (MQEKDSKDVT). The disordered stretch occupies residues 1-57 (MQEKDSKDVTMEDEETIASQEEIEVEGNSEESSKEEESNNSEISDENLSEENLKLKD). Acidic residues predominate over residues 11 to 29 (MEDEETIASQEEIEVEGNS).

Belongs to the GrpE family. Homodimer.

It localises to the cytoplasm. Participates actively in the response to hyperosmotic and heat shock by preventing the aggregation of stress-denatured proteins, in association with DnaK and GrpE. It is the nucleotide exchange factor for DnaK and may function as a thermosensor. Unfolded proteins bind initially to DnaJ; upon interaction with the DnaJ-bound protein, DnaK hydrolyzes its bound ATP, resulting in the formation of a stable complex. GrpE releases ADP from DnaK; ATP binding to DnaK triggers the release of the substrate protein, thus completing the reaction cycle. Several rounds of ATP-dependent interactions between DnaJ, DnaK and GrpE are required for fully efficient folding. In Clostridium acetobutylicum (strain ATCC 824 / DSM 792 / JCM 1419 / IAM 19013 / LMG 5710 / NBRC 13948 / NRRL B-527 / VKM B-1787 / 2291 / W), this protein is Protein GrpE.